Reading from the N-terminus, the 251-residue chain is LexA repressor (251 aa).

A DNA-binding region (H-T-H motif) is located at residues 26–46; that stretch reads FDEMKDALGLKSKSGIHRLIK. Catalysis depends on for autocatalytic cleavage activity residues serine 172 and lysine 210.

It belongs to the peptidase S24 family. In terms of assembly, homodimer.

The catalysed reaction is Hydrolysis of Ala-|-Gly bond in repressor LexA.. Its function is as follows. Represses a number of genes involved in the response to DNA damage (SOS response), including recA and lexA. In the presence of single-stranded DNA, RecA interacts with LexA causing an autocatalytic cleavage which disrupts the DNA-binding part of LexA, leading to derepression of the SOS regulon and eventually DNA repair. The protein is LexA repressor of Rhodospirillum rubrum (strain ATCC 11170 / ATH 1.1.1 / DSM 467 / LMG 4362 / NCIMB 8255 / S1).